The chain runs to 363 residues: MTSEQTLLVLGIETTCDETAAAVVERRADGSGRILSNIVRSQIDEHAPFGGVVPEIAARAHVDLLDGIVANAMREAGTGFAQLSGVAAAAGPGLIGGVIVGLTTAKAIALVHNTPLIAVNHLEAHALTPRLTDATEFPYCLFLASGGHTQIVAVLGVGDYVRLGTTVDDAIGEAFDKIAKMLGLPYPGGPQVERAAASGDAARFAFPRPMLGRPDANFSLSGLKTAVRNEASRLTPLEPQDINDLCAGFQAAVLDSMADRLGAGLRLFRERFGAPKALVAAGGVAANQAIRRSLREVAAKAQTTLMVPPPALCTDNGAMIAWAGAERLALGLTDTMDAAPRARWLLDANATAPGKFANTRAGF.

Fe cation-binding residues include histidine 121 and histidine 125. Residues 143-147, aspartate 176, glycine 189, and asparagine 287 contribute to the substrate site; that span reads LASGG. Aspartate 315 contacts Fe cation.

This sequence belongs to the KAE1 / TsaD family. It depends on Fe(2+) as a cofactor.

The protein resides in the cytoplasm. It catalyses the reaction L-threonylcarbamoyladenylate + adenosine(37) in tRNA = N(6)-L-threonylcarbamoyladenosine(37) in tRNA + AMP + H(+). Its function is as follows. Required for the formation of a threonylcarbamoyl group on adenosine at position 37 (t(6)A37) in tRNAs that read codons beginning with adenine. Is involved in the transfer of the threonylcarbamoyl moiety of threonylcarbamoyl-AMP (TC-AMP) to the N6 group of A37, together with TsaE and TsaB. TsaD likely plays a direct catalytic role in this reaction. The sequence is that of tRNA N6-adenosine threonylcarbamoyltransferase from Rhodopseudomonas palustris (strain BisB5).